The following is a 180-amino-acid chain: Nucleoside triphosphate/diphosphate phosphatase (180 aa).

The active-site Proton donor is Arg-26. Positions 90, 106, 108, 110, 123, and 126 each coordinate Mg(2+).

This sequence belongs to the Ntdp family. It depends on Mg(2+) as a cofactor.

It carries out the reaction a ribonucleoside 5'-triphosphate + H2O = a ribonucleoside 5'-diphosphate + phosphate + H(+). The catalysed reaction is a ribonucleoside 5'-diphosphate + H2O = a ribonucleoside 5'-phosphate + phosphate + H(+). Functionally, has nucleoside phosphatase activity towards nucleoside triphosphates and nucleoside diphosphates. The protein is Nucleoside triphosphate/diphosphate phosphatase of Staphylococcus epidermidis (strain ATCC 35984 / DSM 28319 / BCRC 17069 / CCUG 31568 / BM 3577 / RP62A).